The chain runs to 238 residues: Thrombin-like enzyme gyroxin B2.1 (238 aa).

A Peptidase S1 domain is found at 1–229; the sequence is VIGGDECNIN…HLDWIQNIIA (229 aa). Disulfide bonds link C7/C141, C28/C44, C78/C236, C120/C190, C152/C169, and C180/C205. Residue H43 is the Charge relay system of the active site. N81 carries N-linked (GlcNAc...) asparagine glycosylation. D88 functions as the Charge relay system in the catalytic mechanism. The active-site Charge relay system is S184.

It belongs to the peptidase S1 family. Snake venom subfamily. Monomer. Expressed by the venom gland.

The protein localises to the secreted. Its function is as follows. Thrombin-like snake venom serine protease. Displays a specificity similar to trypsin. Releases only fibrinopeptide A in the conversion of fibrinogen (FGA) to fibrin. Shows coagulant, esterase and amidase activities. Reversibly increases the permeability of the blood brain barrier (BBB) in mice. Induces the barrel rotation syndrome in mice, which is manifested by gyroxin-like, rapid rolling motions. This syndrome may be due to its effect on BBB permeability, and certainly also to other actions affecting endogenous substrates present in the endothelium, nervous tissues or blood. This is Thrombin-like enzyme gyroxin B2.1 from Crotalus durissus terrificus (South American rattlesnake).